The chain runs to 712 residues: Probable serine/threonine-protein kinase fhkE (712 aa).

The region spanning Ile-46 to Val-100 is the FHA domain. In terms of domain architecture, Protein kinase spans Tyr-145–Phe-411. Residues Leu-151–Val-159 and Lys-174 each bind ATP. The active-site Proton acceptor is the Asp-270. Positions Asn-414 to Thr-442 form a coiled coil. Positions Ala-431 to Arg-695 are disordered. 5 stretches are compositionally biased toward low complexity: residues Glu-436 to Asn-446, Gly-459 to Asn-481, Asn-514 to Thr-571, Asn-595 to Ile-605, and Asn-616 to Asn-639. The span at Pro-669–Gly-678 shows a compositional bias: polar residues.

This sequence belongs to the protein kinase superfamily. CAMK Ser/Thr protein kinase family. CHK2 subfamily.

It catalyses the reaction L-seryl-[protein] + ATP = O-phospho-L-seryl-[protein] + ADP + H(+). It carries out the reaction L-threonyl-[protein] + ATP = O-phospho-L-threonyl-[protein] + ADP + H(+). In Dictyostelium discoideum (Social amoeba), this protein is Probable serine/threonine-protein kinase fhkE (fhkE).